Consider the following 312-residue polypeptide: Protoheme IX farnesyltransferase (312 aa).

9 helical membrane-spanning segments follow: residues 29–49, 50–70, 90–110, 117–137, 150–170, 177–197, 223–243, 246–266, and 292–312; these read VMSL…GHMN, PVLA…SGAL, IPAG…LSAF, LMVN…YAVI, IVIG…AATG, LVLF…LSLF, ALFY…MGFA, FYGV…WRLW, and IFAV…FGVF.

Belongs to the UbiA prenyltransferase family. Protoheme IX farnesyltransferase subfamily.

The protein localises to the cell inner membrane. It carries out the reaction heme b + (2E,6E)-farnesyl diphosphate + H2O = Fe(II)-heme o + diphosphate. It functions in the pathway porphyrin-containing compound metabolism; heme O biosynthesis; heme O from protoheme: step 1/1. In terms of biological role, converts heme B (protoheme IX) to heme O by substitution of the vinyl group on carbon 2 of heme B porphyrin ring with a hydroxyethyl farnesyl side group. The polypeptide is Protoheme IX farnesyltransferase (Brucella melitensis biotype 1 (strain ATCC 23456 / CCUG 17765 / NCTC 10094 / 16M)).